Reading from the N-terminus, the 208-residue chain is Uracil phosphoribosyltransferase (208 aa).

5-phospho-alpha-D-ribose 1-diphosphate-binding positions include R78, R103, and 130–138 (DPMLATGGS). Uracil-binding positions include I193 and 198 to 200 (GDA). D199 provides a ligand contact to 5-phospho-alpha-D-ribose 1-diphosphate.

It belongs to the UPRTase family. Mg(2+) is required as a cofactor.

It carries out the reaction UMP + diphosphate = 5-phospho-alpha-D-ribose 1-diphosphate + uracil. The protein operates within pyrimidine metabolism; UMP biosynthesis via salvage pathway; UMP from uracil: step 1/1. With respect to regulation, allosterically activated by GTP. Its function is as follows. Catalyzes the conversion of uracil and 5-phospho-alpha-D-ribose 1-diphosphate (PRPP) to UMP and diphosphate. This chain is Uracil phosphoribosyltransferase, found in Aeromonas salmonicida (strain A449).